We begin with the raw amino-acid sequence, 293 residues long: MAGSLSEIKDKILSTEKTSKITSAMQMVSSAKLVKSEQAARDFQVYASKIRQITTNLLKSDLVSGSDNPMLSSRPVKKTGYIVITSDKGLVGGYNSKILKAMMDTITDYHTENDDYAIISIGSVGSDFFKARGMNVSFELRGLEDQPSFDQVGKIIAQAVEMYKNELFDELYVCYNHHVNSLTSQVRMQQMLPIKELDAEEASEDRVITGFELEPNREVILEQLLPQYTESLIYGAIIDAKTAEHAAGMTAMQTATDNAKNVINDLTIQYNRARQAAITQEITEIVAGANALE.

The protein belongs to the ATPase gamma chain family. F-type ATPases have 2 components, CF(1) - the catalytic core - and CF(0) - the membrane proton channel. CF(1) has five subunits: alpha(3), beta(3), gamma(1), delta(1), epsilon(1). CF(0) has three main subunits: a, b and c.

Its subcellular location is the cell membrane. Produces ATP from ADP in the presence of a proton gradient across the membrane. The gamma chain is believed to be important in regulating ATPase activity and the flow of protons through the CF(0) complex. This chain is ATP synthase gamma chain, found in Streptococcus agalactiae serotype Ia (strain ATCC 27591 / A909 / CDC SS700).